We begin with the raw amino-acid sequence, 504 residues long: 2,3-bisphosphoglycerate-independent phosphoglycerate mutase (504 aa).

Residues Asp-11 and Ser-61 each coordinate Mn(2+). Ser-61 (phosphoserine intermediate) is an active-site residue. Substrate-binding positions include His-122, 152–153, Arg-183, Arg-189, 255–258, and Lys-329; these read RD and RNDR. The Mn(2+) site is built by Asp-396, His-400, Asp-437, His-438, and His-455.

The protein belongs to the BPG-independent phosphoglycerate mutase family. Monomer. The cofactor is Mn(2+).

The enzyme catalyses (2R)-2-phosphoglycerate = (2R)-3-phosphoglycerate. It participates in carbohydrate degradation; glycolysis; pyruvate from D-glyceraldehyde 3-phosphate: step 3/5. Catalyzes the interconversion of 2-phosphoglycerate and 3-phosphoglycerate. The chain is 2,3-bisphosphoglycerate-independent phosphoglycerate mutase from Bacteroides thetaiotaomicron (strain ATCC 29148 / DSM 2079 / JCM 5827 / CCUG 10774 / NCTC 10582 / VPI-5482 / E50).